The sequence spans 475 residues: UDP-N-acetylmuramate--L-alanine ligase (475 aa).

121 to 127 (GTHGKTT) contributes to the ATP binding site.

The protein belongs to the MurCDEF family.

The protein resides in the cytoplasm. It catalyses the reaction UDP-N-acetyl-alpha-D-muramate + L-alanine + ATP = UDP-N-acetyl-alpha-D-muramoyl-L-alanine + ADP + phosphate + H(+). It participates in cell wall biogenesis; peptidoglycan biosynthesis. Cell wall formation. This is UDP-N-acetylmuramate--L-alanine ligase from Salinibacter ruber (strain DSM 13855 / M31).